Here is a 279-residue protein sequence, read N- to C-terminus: Movement protein (279 aa).

The protein belongs to the cucumovirus movement protein family.

Its subcellular location is the host cell junction. It localises to the host plasmodesma. Its function is as follows. Transports viral genome to neighboring plant cells directly through plasmosdesmata, without any budding. The movement protein allows efficient cell to cell propagation, by bypassing the host cell wall barrier. Acts by forming a tubular structure at the host plasmodesmata, enlarging it enough to allow free passage of virion capsids. This chain is Movement protein, found in Cucumber mosaic virus (strain Kin) (CMV).